Consider the following 505-residue polypeptide: Maturase K (505 aa).

The protein belongs to the intron maturase 2 family. MatK subfamily.

The protein localises to the plastid. It localises to the chloroplast. Usually encoded in the trnK tRNA gene intron. Probably assists in splicing its own and other chloroplast group II introns. The chain is Maturase K from Gomphrena haageana (Haage's globe-amaranth).